Reading from the N-terminus, the 198-residue chain is ATP-dependent Clp protease proteolytic subunit 1 (198 aa).

The active-site Nucleophile is the S98. Residue H123 is part of the active site.

It belongs to the peptidase S14 family. As to quaternary structure, fourteen ClpP subunits assemble into 2 heptameric rings which stack back to back to give a disk-like structure with a central cavity, resembling the structure of eukaryotic proteasomes.

The protein resides in the cytoplasm. It catalyses the reaction Hydrolysis of proteins to small peptides in the presence of ATP and magnesium. alpha-casein is the usual test substrate. In the absence of ATP, only oligopeptides shorter than five residues are hydrolyzed (such as succinyl-Leu-Tyr-|-NHMec, and Leu-Tyr-Leu-|-Tyr-Trp, in which cleavage of the -Tyr-|-Leu- and -Tyr-|-Trp bonds also occurs).. Its function is as follows. Cleaves peptides in various proteins in a process that requires ATP hydrolysis. Has a chymotrypsin-like activity. Plays a major role in the degradation of misfolded proteins. ClpXP1 is involved in the complete degradation of the Site-2 clipped anti-sigma-W factor RsiW. This results in the release of SigW and the transcription activation of the genes under the control of the sigma-W factor. The chain is ATP-dependent Clp protease proteolytic subunit 1 from Bacillus licheniformis (strain ATCC 14580 / DSM 13 / JCM 2505 / CCUG 7422 / NBRC 12200 / NCIMB 9375 / NCTC 10341 / NRRL NRS-1264 / Gibson 46).